A 666-amino-acid polypeptide reads, in one-letter code: MGTFKINSAFKPTGDQPQAIASIVNGIKNNNKWQTLLGVTGSGKTFTMANIIEKVQKPTLVIAHNKTLAAQLCSEFRDFFPDSSVEYFVSYYDYYQPEAYVAQTDTYIEKDASINDEIDKLRHSATSALFERRDVIVVASVSCIYGLGNPEEYKKLSISLRTGMNKDRDEILEKLVEMQYERNEINFVRGTFKVKGDTIDIFPAGSTSSAIRVELFGDEIDKIKEFDVLTGNTIKTLKHTVIFPASHFATSSDKIEEAIKQIEIELEERLRELNSEDKLLEAQRLKQRTNFDIEMMREVGYCTGIENYSRIMDGRQKGEPPKTLIDYFPDDFLMFIDESHVTLPQVKAMYGGDRSRKNSLVDYGFRLPSAYDNRPLKFDEFEEKINQIVFVSATPSNYELDHSENIAEQVIRPTGLLDPEIEVRPTKGQIDDLYSEIKNTIQNGFRILVTTLTKKMAEDLTDYLKDLGIKTTYMHSDIDTLERMKIIKDVRTGEFDVLVGINLLREGLDIPEVALVAILDADKEGFLRSERSLIQTIGRAARNSESRVIMYGDKITDAMGKAISETKRRRKIQIEYNEKNGIKPTTIKKAVRDVIGISEVAEGKTEYKSMDEAVKADNKNIDKLIKEFEKEMKEAAKELQFEKAAYFRDKVNELKKKLNENEEVIK.

Residues 25–412 (NGIKNNNKWQ…SENIAEQVIR (388 aa)) form the Helicase ATP-binding domain. Residue 38 to 45 (GVTGSGKT) participates in ATP binding. The Beta-hairpin signature appears at 91 to 114 (YYDYYQPEAYVAQTDTYIEKDASI). In terms of domain architecture, Helicase C-terminal spans 429-595 (QIDDLYSEIK…TIKKAVRDVI (167 aa)). Residues 622–657 (DKLIKEFEKEMKEAAKELQFEKAAYFRDKVNELKKK) form the UVR domain.

The protein belongs to the UvrB family. In terms of assembly, forms a heterotetramer with UvrA during the search for lesions. Interacts with UvrC in an incision complex.

The protein localises to the cytoplasm. The UvrABC repair system catalyzes the recognition and processing of DNA lesions. A damage recognition complex composed of 2 UvrA and 2 UvrB subunits scans DNA for abnormalities. Upon binding of the UvrA(2)B(2) complex to a putative damaged site, the DNA wraps around one UvrB monomer. DNA wrap is dependent on ATP binding by UvrB and probably causes local melting of the DNA helix, facilitating insertion of UvrB beta-hairpin between the DNA strands. Then UvrB probes one DNA strand for the presence of a lesion. If a lesion is found the UvrA subunits dissociate and the UvrB-DNA preincision complex is formed. This complex is subsequently bound by UvrC and the second UvrB is released. If no lesion is found, the DNA wraps around the other UvrB subunit that will check the other stand for damage. This is UvrABC system protein B from Clostridium acetobutylicum (strain ATCC 824 / DSM 792 / JCM 1419 / IAM 19013 / LMG 5710 / NBRC 13948 / NRRL B-527 / VKM B-1787 / 2291 / W).